The sequence spans 746 residues: Ring assembly protein 3 (746 aa).

Its subcellular location is the cytoplasm. In terms of biological role, essential for actinomyosin ring assembly during cytokinesis. Has a role, in conjunction with F-actin, in assembling myosin II-containing proteins, such as myo2, at the division site. This chain is Ring assembly protein 3 (rng3), found in Schizosaccharomyces pombe (strain 972 / ATCC 24843) (Fission yeast).